Reading from the N-terminus, the 188-residue chain is UPF0397 protein LCK_00164 (188 aa).

Helical transmembrane passes span V15–P35, G48–I68, G79–G99, W121–I141, and A154–A174.

This sequence belongs to the UPF0397 family.

It localises to the cell membrane. The protein is UPF0397 protein LCK_00164 of Leuconostoc citreum (strain KM20).